A 424-amino-acid polypeptide reads, in one-letter code: MSVAVLAFGLNHTSAPVSVRERVSMPVDLVKPALEGLRATFGGAVREAAILSTCNRTELYCAAEGQVAEHLPAWLAEHNRLEAAALRPHLYRHQHDDAVRHAFRVASGLDSMVLGEPQILGQMKDAVRAANEAGALGTLLHQLFQRTFSVAKEVRSQTAIGAHSVSMAAAAVRLAERVFGQLEDARTLFIGAGEMIELCATHFAAQRPRSMVVANRTIERAETLAGRFSAQTMKLADLTERLAEFDVIVSCTASSLPILGLGMVERATRQRRHRPMVMIDLAVPRDIEPEVGRLDDVYLYSVDDLGRLVQSGTDARRAAVVQAEAIIETRVQGFMHWMQSREVVPVIRDLHQAADDVRAAELERARRMLARGESPEAVLEQLAHGLTQKYLHGPLAALNRSEGDERRQLLAWVPRLFPGRDSRR.

Residues 53-56, Ser-111, 116-118, and Gln-122 contribute to the substrate site; these read TCNR and EPQ. Cys-54 functions as the Nucleophile in the catalytic mechanism. 191–196 provides a ligand contact to NADP(+); the sequence is GAGEMI.

The protein belongs to the glutamyl-tRNA reductase family. As to quaternary structure, homodimer.

It catalyses the reaction (S)-4-amino-5-oxopentanoate + tRNA(Glu) + NADP(+) = L-glutamyl-tRNA(Glu) + NADPH + H(+). Its pathway is porphyrin-containing compound metabolism; protoporphyrin-IX biosynthesis; 5-aminolevulinate from L-glutamyl-tRNA(Glu): step 1/2. Functionally, catalyzes the NADPH-dependent reduction of glutamyl-tRNA(Glu) to glutamate 1-semialdehyde (GSA). This Bordetella bronchiseptica (strain ATCC BAA-588 / NCTC 13252 / RB50) (Alcaligenes bronchisepticus) protein is Glutamyl-tRNA reductase.